A 317-amino-acid chain; its full sequence is Ribosomal protein L11 methyltransferase (317 aa).

The S-adenosyl-L-methionine site is built by T158, G179, D201, and N244.

This sequence belongs to the methyltransferase superfamily. PrmA family.

The protein resides in the cytoplasm. The catalysed reaction is L-lysyl-[protein] + 3 S-adenosyl-L-methionine = N(6),N(6),N(6)-trimethyl-L-lysyl-[protein] + 3 S-adenosyl-L-homocysteine + 3 H(+). In terms of biological role, methylates ribosomal protein L11. This is Ribosomal protein L11 methyltransferase from Streptococcus pyogenes serotype M1.